The sequence spans 383 residues: Opsin Rh4 (383 aa).

The Extracellular segment spans residues 1 to 57 (MDIAGSLCNASEGPVLRPEARVSGNGDLQFLGWNVPPDQIQHIPEHWLTQLEPPASM). A glycan (N-linked (GlcNAc...) asparagine) is linked at Asn-9. A helical membrane pass occupies residues 58-82 (HYMLGVFYIFLFCASTVGNGMVIWI). The Cytoplasmic portion of the chain corresponds to 83 to 94 (FSTSKALRTPSN). The chain crosses the membrane as a helical span at residues 95–117 (MFVLNLAVFDFIMCLKAPIFIYN). At 118 to 133 (SFHRGFALGNTGCQIF) the chain is on the extracellular side. A disulfide bridge connects residues Cys-130 and Cys-207. Residues 134-153 (AAIGSYSGIGAGMTNAAIGY) traverse the membrane as a helical segment. Residues 154–171 (DRLNVITKPMNRNMTFTK) are Cytoplasmic-facing. A helical transmembrane segment spans residues 172 to 196 (AIIMNVIIWLYCTPWVVLPLTQFWD). The Extracellular segment spans residues 197–220 (RFVPEGYLTSCTFDYLTDNFDTRL). Residues 221–248 (FVGTIFFFSFVCPTLMIIYYYSQIVGHV) traverse the membrane as a helical segment. At 249-284 (FSHEKALREQAKKMNVESLRSNVDKSKDTAEIRIAK) the chain is on the cytoplasmic side. The helical transmembrane segment at 285–308 (AAITICFLFFVSWTPYGVMSLIGA) threads the bilayer. At 309–316 (FGDKSLLT) the chain is on the extracellular side. A helical membrane pass occupies residues 317-341 (PGATMIPACTCKLVACIDPFVYAIS). Lys-328 bears the N6-(retinylidene)lysine mark. Residues 342–383 (HPRYRMELQKRCPWLAIDEKAPESSSAASTTTTQEQQQTTAA) lie on the Cytoplasmic side of the membrane. The disordered stretch occupies residues 361–383 (KAPESSSAASTTTTQEQQQTTAA). Residues 364 to 383 (ESSSAASTTTTQEQQQTTAA) show a composition bias toward low complexity.

It belongs to the G-protein coupled receptor 1 family. Opsin subfamily. Phosphorylated on some or all of the serine and threonine residues present in the C-terminal region.

It localises to the membrane. Visual pigments are the light-absorbing molecules that mediate vision. They consist of an apoprotein, opsin, covalently linked to cis-retinal. This Drosophila virilis (Fruit fly) protein is Opsin Rh4 (Rh4).